The chain runs to 332 residues: tRNA-dihydrouridine synthase B (332 aa).

FMN contacts are provided by residues 19-21 (PMA) and Gln73. Catalysis depends on Cys103, which acts as the Proton donor. FMN is bound by residues Lys142, 203–205 (NGD), and 227–228 (GR).

The protein belongs to the Dus family. DusB subfamily. Requires FMN as cofactor.

It catalyses the reaction a 5,6-dihydrouridine in tRNA + NAD(+) = a uridine in tRNA + NADH + H(+). The catalysed reaction is a 5,6-dihydrouridine in tRNA + NADP(+) = a uridine in tRNA + NADPH + H(+). Functionally, catalyzes the synthesis of 5,6-dihydrouridine (D), a modified base found in the D-loop of most tRNAs, via the reduction of the C5-C6 double bond in target uridines. The polypeptide is tRNA-dihydrouridine synthase B (Pseudomonas aeruginosa (strain ATCC 15692 / DSM 22644 / CIP 104116 / JCM 14847 / LMG 12228 / 1C / PRS 101 / PAO1)).